A 278-amino-acid chain; its full sequence is tRNA(Phe) (4-demethylwyosine(37)-C(7)) aminocarboxypropyltransferase (278 aa).

S-adenosyl-L-methionine-binding positions include S109, R116, E155, and 183-184 (DN).

It belongs to the class I-like SAM-binding methyltransferase superfamily. TRM5/TYW2 family.

Its subcellular location is the cytoplasm. The catalysed reaction is 4-demethylwyosine(37) in tRNA(Phe) + S-adenosyl-L-methionine = 4-demethyl-7-[(3S)-3-amino-3-carboxypropyl]wyosine(37) in tRNA(Phe) + S-methyl-5'-thioadenosine + H(+). In terms of biological role, S-adenosyl-L-methionine-dependent transferase that acts as a component of the wyosine derivatives biosynthesis pathway. Catalyzes the transfer of the alpha-amino-alpha-carboxypropyl (acp) group from S-adenosyl-L-methionine to 4-demethylwyosine (imG-14), forming 7-aminocarboxypropyl-demethylwyosine (wybutosine-86) at position 37 of tRNA(Phe). The protein is tRNA(Phe) (4-demethylwyosine(37)-C(7)) aminocarboxypropyltransferase of Pyrococcus horikoshii (strain ATCC 700860 / DSM 12428 / JCM 9974 / NBRC 100139 / OT-3).